A 441-amino-acid polypeptide reads, in one-letter code: Peroxisome proliferator-activated receptor delta (441 aa).

Residues 1 to 58 (MEQPPGEAAEVREEEEKKEVAEAEGAPELNGGPERSLPSSSYTDLSRSSSPPSLLDQL) are disordered. Positions 9–21 (AEVREEEEKKEVA) are enriched in basic and acidic residues. Over residues 36-55 (SLPSSSYTDLSRSSSPPSLL) the composition is skewed to low complexity. Residues 70–145 (LNMECRVCGD…LGMSHNAIRF (76 aa)) constitute a DNA-binding region (nuclear receptor). 2 NR C4-type zinc fingers span residues 74–94 (CRVCGDKASGFHYGVHACEGC) and 111–133 (CERICKIQKKNRNKCQYCRFQKC). In terms of domain architecture, NR LBD spans 211–439 (FVIHDIETLW…HPLLQEIYKD (229 aa)).

The protein belongs to the nuclear hormone receptor family. NR1 subfamily. Heterodimer with the retinoid X receptor. Interacts (via domain NR LBD) with CRY1 and CRY2 in a ligand-dependent manner. In terms of processing, 'Lys-48'-linked polyubiquitinated; leading to proteasomal degradation. Deubiquitinated and stabilized by OTUD3.

The protein localises to the nucleus. Functionally, ligand-activated transcription factor key mediator of energy metabolism in adipose tissues. Receptor that binds peroxisome proliferators such as hypolipidemic drugs and fatty acids. Has a preference for poly-unsaturated fatty acids, such as gamma-linoleic acid and eicosapentanoic acid. Once activated by a ligand, the receptor binds to promoter elements of target genes. Regulates the peroxisomal beta-oxidation pathway of fatty acids. Functions as a transcription activator for the acyl-CoA oxidase gene. Decreases expression of NPC1L1 once activated by a ligand. This is Peroxisome proliferator-activated receptor delta (PPARD) from Canis lupus familiaris (Dog).